A 256-amino-acid chain; its full sequence is Lysosomal membrane ascorbate-dependent ferrireductase CYB561A3 (256 aa).

Residues 1–3 (MAS) are Cytoplasmic-facing. The helical transmembrane segment at 4–24 (GWFYMSCMVLGSLGSMCILFT) threads the bilayer. Residues 12–219 (VLGSLGSMCI…FGLLVLYILL (208 aa)) form the Cytochrome b561 domain. Over 25-40 (TYWMQYWRGGFAWDGT) the chain is Lumenal. The chain crosses the membrane as a helical span at residues 41 to 61 (VLMFNWHPVLMVSGMVVLYGA). 2 residues coordinate heme b: His-47 and Arg-67. At 62–83 (ASLVYRLPASWVGPKLPWKVLH) the chain is on the cytoplasmic side. Positions 76 and 80 each coordinate L-ascorbate. Heme b is bound at residue His-83. A helical transmembrane segment spans residues 84–104 (AALHLLAFTVTVVGLTAVFGF). Residues 105–119 (HNHSKITHLYSLHSW) are Lumenal-facing. Asn-106 is a glycosylation site (N-linked (GlcNAc...) asparagine). Heme b contacts are provided by residues 112–115 (HLYS) and His-117. A helical membrane pass occupies residues 120-140 (LGITTVALFACQWFLGFAVFL). Over 141–154 (LPWASQWLRSLLKP) the chain is Cytoplasmic. Arg-149 is an L-ascorbate binding site. Residues 155-175 (VHVFFGACILSLSIASVISGI) traverse the membrane as a helical segment. Heme b contacts are provided by His-156 and Glu-177. The Lumenal portion of the chain corresponds to 176-202 (NEKLFFVLKNATRPYSSLPGEAVFANS). The chain crosses the membrane as a helical span at residues 203 to 223 (TGILVVSFGLLVLYILLASSW). A heme b-binding site is contributed by Arg-224. The Cytoplasmic segment spans residues 224–256 (RRPDPGALTDRQVWLLVSHYRWDKAKKACFAPC).

As to quaternary structure, homodimer. It depends on heme b as a cofactor. In terms of processing, N-glycosylated.

It is found in the late endosome membrane. Its subcellular location is the lysosome membrane. It catalyses the reaction Fe(3+)(out) + L-ascorbate(in) = monodehydro-L-ascorbate radical(in) + Fe(2+)(out) + H(+). Functionally, transmembrane reductase that uses ascorbate as an electron donor in the cytoplasm and transfers electrons across membranes to reduce iron cations Fe(3+) into Fe(2+) in the lumen of the late endosome and lysosome. Reduced iron can then be extruded from the late endosome and lysosome to the cytoplasm by divalent metal-specific transporters. It is therefore most probably involved in endosomal and lysosomal cellular iron homeostasis. This Rattus norvegicus (Rat) protein is Lysosomal membrane ascorbate-dependent ferrireductase CYB561A3.